Reading from the N-terminus, the 346-residue chain is MAKRKLTQNQTRRIQSNNAKTLHRHKKKDIEWSDEMLGESQEGVVVTRYSIHADVENEQGEIYRCNLRRTLSSLVVGDKVVWRKGNEQLQGVSGVIEAIHPRENEISRPDYYDGLKPIAANIDRIIIVSAVLPTLSLNIIDRYLVVCEIAEIKPLIVLNKVDLLAQEQRQEIEDQLKIYQDIGYEILMISAKSGENMEKLTALLAQGTAIFVGQSGVGKSSLINHILPSVNAQVGDVSETSGLGQHTTTSSRLYHLPQGGNLIDSPGIREFGLWHLDAEQITKGYREFQYVLGTCKFRDCKHLSDPGCALREAVEQGKISPVRYDNYHRLIESLSETKSQRHFSLV.

The disordered stretch occupies residues 1 to 26; that stretch reads MAKRKLTQNQTRRIQSNNAKTLHRHK. Over residues 7–20 the composition is skewed to polar residues; the sequence is TQNQTRRIQSNNAK. Residues 103 to 271 form the CP-type G domain; it reads ENEISRPDYY…LIDSPGIREF (169 aa). GTP-binding positions include 159 to 162 and 213 to 221; these read NKVD and GQSGVGKSS. Cys-295, Cys-300, His-302, and Cys-308 together coordinate Zn(2+).

It belongs to the TRAFAC class YlqF/YawG GTPase family. RsgA subfamily. As to quaternary structure, monomer. Associates with 30S ribosomal subunit, binds 16S rRNA. It depends on Zn(2+) as a cofactor.

It is found in the cytoplasm. One of several proteins that assist in the late maturation steps of the functional core of the 30S ribosomal subunit. Helps release RbfA from mature subunits. May play a role in the assembly of ribosomal proteins into the subunit. Circularly permuted GTPase that catalyzes slow GTP hydrolysis, GTPase activity is stimulated by the 30S ribosomal subunit. This chain is Small ribosomal subunit biogenesis GTPase RsgA, found in Haemophilus influenzae (strain PittGG).